Consider the following 216-residue polypeptide: Sperm microtubule inner protein 8 (216 aa).

Microtubule inner protein component of sperm flagellar doublet microtubules. As to expression, expressed in testis, prostate and placenta.

The protein resides in the cytoplasm. Its subcellular location is the cytoskeleton. The protein localises to the flagellum axoneme. Functionally, microtubule inner protein (MIP) part of the dynein-decorated doublet microtubules (DMTs) in flagellum axoneme. May serve to reinforce and thus stabilize the microtubule structure in the sperm flagella. The chain is Sperm microtubule inner protein 8 from Homo sapiens (Human).